The primary structure comprises 151 residues: Ribosome maturation factor RimP (151 aa).

Belongs to the RimP family.

Its subcellular location is the cytoplasm. Required for maturation of 30S ribosomal subunits. The polypeptide is Ribosome maturation factor RimP (Caldicellulosiruptor saccharolyticus (strain ATCC 43494 / DSM 8903 / Tp8T 6331)).